The following is a 241-amino-acid chain: Biosynthetic peptidoglycan transglycosylase (241 aa).

A helical membrane pass occupies residues 18–38 (GVIGIIALWMAGILIFAFLPV).

It belongs to the glycosyltransferase 51 family.

It localises to the cell inner membrane. It carries out the reaction [GlcNAc-(1-&gt;4)-Mur2Ac(oyl-L-Ala-gamma-D-Glu-L-Lys-D-Ala-D-Ala)](n)-di-trans,octa-cis-undecaprenyl diphosphate + beta-D-GlcNAc-(1-&gt;4)-Mur2Ac(oyl-L-Ala-gamma-D-Glu-L-Lys-D-Ala-D-Ala)-di-trans,octa-cis-undecaprenyl diphosphate = [GlcNAc-(1-&gt;4)-Mur2Ac(oyl-L-Ala-gamma-D-Glu-L-Lys-D-Ala-D-Ala)](n+1)-di-trans,octa-cis-undecaprenyl diphosphate + di-trans,octa-cis-undecaprenyl diphosphate + H(+). It functions in the pathway cell wall biogenesis; peptidoglycan biosynthesis. Peptidoglycan polymerase that catalyzes glycan chain elongation from lipid-linked precursors. This Yersinia pseudotuberculosis serotype O:3 (strain YPIII) protein is Biosynthetic peptidoglycan transglycosylase.